We begin with the raw amino-acid sequence, 368 residues long: MASDAQPSVDQPSAGTPGATGNSTGTTGTEIVFRDVTKIFKQGKKEIHALQDINTQIPAGSIVGIIGYSGAGKSTLVRQINGLDRPTSGQILLDGQDIVPLPESQMRKLRSDIGMIFQQFNLFSSRNVAGNVAYPLRLQGMPKQQREERVKELLEFVGLSDKGKAYPEQLSGGQKQRVGIARALATNPSLLLADEATSALDPSTTRDVLELLRKVNRELGITIVVITHEMEVVRSIADSVIVMESGRIVEQGSVYEVFSNPQTKTAANFVATSLRNTPDMVEAEALQSENGRLFTVTMAEGIGFFDAISKLSAAGVTVNIVHGGVTTLQNHSFGRLTLRLTAHSTDGEKAIEEFHSHMQDSTEIEEIR.

Polar residues predominate over residues 1–14; the sequence is MASDAQPSVDQPSA. The interval 1 to 27 is disordered; it reads MASDAQPSVDQPSAGTPGATGNSTGTT. Over residues 15-27 the composition is skewed to low complexity; the sequence is GTPGATGNSTGTT. The ABC transporter domain maps to 31–270; it reads IVFRDVTKIF…PQTKTAANFV (240 aa). ATP is bound at residue 67-74; the sequence is GYSGAGKS.

The protein belongs to the ABC transporter superfamily. Methionine importer (TC 3.A.1.24) family. The complex is composed of two ATP-binding proteins (MetN), two transmembrane proteins (MetI) and a solute-binding protein (MetQ).

The protein resides in the cell membrane. The enzyme catalyses L-methionine(out) + ATP + H2O = L-methionine(in) + ADP + phosphate + H(+). The catalysed reaction is D-methionine(out) + ATP + H2O = D-methionine(in) + ADP + phosphate + H(+). Part of the ABC transporter complex MetNIQ involved in methionine import. Responsible for energy coupling to the transport system. This Corynebacterium jeikeium (strain K411) protein is Methionine import ATP-binding protein MetN.